Here is a 417-residue protein sequence, read N- to C-terminus: Serine hydroxymethyltransferase 1 (417 aa).

Residues Leu121 and 125-127 each bind (6S)-5,6,7,8-tetrahydrofolate; that span reads GHL. Lys230 carries the N6-(pyridoxal phosphate)lysine modification. 355–357 serves as a coordination point for (6S)-5,6,7,8-tetrahydrofolate; it reads SPF.

This sequence belongs to the SHMT family. As to quaternary structure, homodimer. Requires pyridoxal 5'-phosphate as cofactor.

Its subcellular location is the cytoplasm. The catalysed reaction is (6R)-5,10-methylene-5,6,7,8-tetrahydrofolate + glycine + H2O = (6S)-5,6,7,8-tetrahydrofolate + L-serine. Its pathway is one-carbon metabolism; tetrahydrofolate interconversion. It functions in the pathway amino-acid biosynthesis; glycine biosynthesis; glycine from L-serine: step 1/1. Its function is as follows. Catalyzes the reversible interconversion of serine and glycine with tetrahydrofolate (THF) serving as the one-carbon carrier. This reaction serves as the major source of one-carbon groups required for the biosynthesis of purines, thymidylate, methionine, and other important biomolecules. Also exhibits THF-independent aldolase activity toward beta-hydroxyamino acids, producing glycine and aldehydes, via a retro-aldol mechanism. This chain is Serine hydroxymethyltransferase 1, found in Pseudomonas syringae pv. tomato (strain ATCC BAA-871 / DC3000).